We begin with the raw amino-acid sequence, 148 residues long: Probable DNA-directed RNA polymerases I, II, and III subunit RPABC3 (148 aa).

Residues 16 to 40 (DPDGKKFDRVSRYFCDAESFKMELI) form a non-specific ssDNA binding region.

The protein belongs to the eukaryotic RPB8 RNA polymerase subunit family. Component of the RNA polymerase I (Pol I), RNA polymerase II (Pol II) and RNA polymerase III (Pol III) complexes consisting of at least 13, 12 and 17 subunits, respectively. Directly interacts with POLR2A.

It is found in the nucleus. Its function is as follows. DNA-dependent RNA polymerase catalyzes the transcription of DNA into RNA using the four ribonucleoside triphosphates as substrates. Common component of RNA polymerases I, II and III which synthesize ribosomal RNA precursors, mRNA precursors and many functional non-coding RNAs, and small RNAs, such as 5S rRNA and tRNAs, respectively. The protein is Probable DNA-directed RNA polymerases I, II, and III subunit RPABC3 (rpb-8) of Caenorhabditis elegans.